The following is a 459-amino-acid chain: Sulfide:quinone oxidoreductase, mitochondrial (459 aa).

The N-terminal 24 residues, 1 to 24, are a transit peptide targeting the mitochondrion; the sequence is MLTLNSTIKSVTGSFQSASMLARF. 35-39 is a binding site for FAD; the sequence is GGGSA. Residues C204 and C383 each act as cysteine persulfide intermediate in the active site.

The protein belongs to the SQRD family. FAD serves as cofactor.

It is found in the mitochondrion. Catalyzes the oxidation of hydrogen sulfide, with the help of a quinone. The sequence is that of Sulfide:quinone oxidoreductase, mitochondrial (hmt2) from Schizosaccharomyces pombe (strain 972 / ATCC 24843) (Fission yeast).